A 357-amino-acid chain; its full sequence is MGSLESERTVTGYAARDSSGHLSPYTYTLRNKGPEDVIVRVIYCGICHSDLVQMHNEMGMSNYPMVPGHEVVGVVTEIGSEVKKFKVGEHVGVGCIVGSCRSCSNCNGSMEQYCSKRIWTYNDVNHDGTPTQGGFASSMVVDQMFVVRIPENLPLEQAAPLLCAGVTVYSPMKHFGMTEPGKKCGILGLGGVGHMGVKIAKAFGLHVTVISSSDKKKEEALEVLGADAYLVSKDAEKMQEAAESLDYIMDTIPVAHPLEPYLALLKTNGKLVMLGVVPEPLHFVTPLLILGRRSIAGSFIGSMEETQETLDFCAEKKVSSMIEVVGLDYINTAMERLVKNDVRYRFVVDVAASNLDK.

Cysteine 47 lines the Zn(2+) pocket. NADP(+) is bound at residue serine 49. Residues histidine 69, glutamate 70, cysteine 100, cysteine 103, cysteine 106, cysteine 114, and cysteine 163 each contribute to the Zn(2+) site. Residues threonine 167, 188-193 (GLGGVG), 211-216 (SSSDKK), threonine 251, glycine 275, and 298-300 (SFI) each bind NADP(+).

This sequence belongs to the zinc-containing alcohol dehydrogenase family. As to quaternary structure, homodimer. The cofactor is Zn(2+).

It carries out the reaction (E)-cinnamyl alcohol + NADP(+) = (E)-cinnamaldehyde + NADPH + H(+). The enzyme catalyses (E)-coniferol + NADP(+) = (E)-coniferaldehyde + NADPH + H(+). It catalyses the reaction (E)-sinapyl alcohol + NADP(+) = (E)-sinapaldehyde + NADPH + H(+). The catalysed reaction is (E)-4-coumaroyl alcohol + NADP(+) = (E)-4-coumaraldehyde + NADPH + H(+). It carries out the reaction (E)-caffeyl alcohol + NADP(+) = (E)-caffeyl aldehyde + NADPH + H(+). Its pathway is aromatic compound metabolism; phenylpropanoid biosynthesis. Functionally, involved in lignin biosynthesis. Catalyzes the final step specific for the production of lignin monomers. Catalyzes the NADPH-dependent reduction of coniferaldehyde, 5-hydroxyconiferaldehyde, sinapaldehyde, 4-coumaraldehyde and caffeyl aldehyde to their respective alcohols. This chain is Probable cinnamyl alcohol dehydrogenase 7/8 (CAD7), found in Picea abies (Norway spruce).